We begin with the raw amino-acid sequence, 80 residues long: MSKEKSYVIALLLSLLLCLSFQVGVSEANYNAVTTRYSDSPRCANGSSASPPTRHCPRGRPRPPTPRVAVHSNSTKGKGP.

A signal peptide spans 1-28 (MSKEKSYVIALLLSLLLCLSFQVGVSEA). 2 consecutive short sequence motifs (SCOOP motif) follow at residues 32 to 46 (AVTT…CANG) and 66 to 80 (PRVA…GKGP). The interval 37 to 80 (YSDSPRCANGSSASPPTRHCPRGRPRPPTPRVAVHSNSTKGKGP) is disordered. 2 consecutive short sequence motifs (sxS motif essential for MIK2 binding) follow at residues 38–40 (SDS) and 72–74 (SNS). Residues 71–80 (HSNSTKGKGP) are compositionally biased toward polar residues.

This sequence belongs to the serine rich endogenous peptide (SCOOP) phytocytokine family. In terms of assembly, interacts with MIK2 (via extracellular leucine-rich repeat domain); this interaction triggers the formation of complex between MIK2 and the BAK1/SERK3 and SERK4 coreceptors, and subsequent BAK1 activation by phosphorylation. As to expression, mostly expressed in leaves, and, to a lower extent, in seedlings shoots, roots, stems, siliques, seeds and flowers.

The protein resides in the cell membrane. The protein localises to the secreted. It localises to the extracellular space. It is found in the apoplast. Its subcellular location is the endoplasmic reticulum. The protein resides in the golgi apparatus. In terms of biological role, brassicaceae-specific phytocytokine (plant endogenous peptide released into the apoplast) perceived by MIK2 in a BAK1/SERK3 and SERK4 coreceptors-dependent manner, that modulates various physiological and antimicrobial processes including growth prevention and reactive oxygen species (ROS) response regulation. Inhibits root growth. The sequence is that of Serine rich endogenous peptide 15 from Arabidopsis thaliana (Mouse-ear cress).